The primary structure comprises 143 residues: Large ribosomal subunit protein uL15 (143 aa).

Composition is skewed to basic residues over residues 1 to 13 and 23 to 38; these read MIRK…KMRG and KKHR…GNAG. Residues 1–38 are disordered; the sequence is MIRKSKKITKMRGSRTCGYGEAKKHRGAGHRGGRGNAG.

This sequence belongs to the universal ribosomal protein uL15 family. As to quaternary structure, part of the 50S ribosomal subunit.

In terms of biological role, binds to the 23S rRNA. This chain is Large ribosomal subunit protein uL15, found in Methanococcus maripaludis (strain C5 / ATCC BAA-1333).